The following is a 676-amino-acid chain: LIM domain-containing protein 1 (676 aa).

A mediates nuclear export region spans residues K54–S134. Disordered stretches follow at residues K104–H163 and K189–V389. S145 carries the phosphoserine modification. The segment at A186–T260 is interaction with EGLN1/PHD2. Low complexity-rich tracts occupy residues G201 to G213 and L232 to G242. Phosphoserine is present on residues S233 and S239. Gly residues predominate over residues S243–G253. The segment covering L262–V271 has biased composition (polar residues). Residues S272, S277, S304, and S316 each carry the phosphoserine modification. Positions S343–S360 are enriched in low complexity. An interaction with RB1 region spans residues G404–P442. Residues S421 and S424 each carry the phosphoserine modification. 3 consecutive LIM zinc-binding domains span residues G470 to Q531, D535 to P595, and P595 to K664. Positions C472–F676 are necessary for nuclear localization.

This sequence belongs to the zyxin/ajuba family. Interacts (via LIM domains) with TRAF6. Found in a complex with TRAF6, PRKCZ and SQSTM1. Interacts (via LIM domains) SNAI2/SLUG (via SNAG domain) and SCRT1 (via SNAG domain). Interacts with SQSTM1 and RB1. Found in a complex composed of LIMD1, VHL, EGLN1/PHD2, ELOB and CUL2. Interacts with EIF4E, AGO1, AGO2, DCP2, DDX6, LATS1, LATS2, EGLN1/PHD2, EGLN2/PHD1 and EGLN3/PHD3. Interacts (via LIM zinc-binding 2) with isoform 1 and isoform 3 of VHL. Interacts (via LIM domains) with SNAI1 (via SNAG domain). In terms of processing, phosphorylated during mitosis. In terms of tissue distribution, expressed in normal and breast cancer tissues (at protein level). Ubiquitous.

The protein resides in the cytoplasm. Its subcellular location is the nucleus. The protein localises to the P-body. It is found in the cell junction. It localises to the adherens junction. The protein resides in the focal adhesion. Its function is as follows. Adapter or scaffold protein which participates in the assembly of numerous protein complexes and is involved in several cellular processes such as cell fate determination, cytoskeletal organization, repression of gene transcription, cell-cell adhesion, cell differentiation, proliferation and migration. Positively regulates microRNA (miRNA)-mediated gene silencing and is essential for P-body formation and integrity. Acts as a hypoxic regulator by bridging an association between the prolyl hydroxylases and VHL enabling efficient degradation of HIF1A. Acts as a transcriptional corepressor for SNAI1- and SNAI2/SLUG-dependent repression of E-cadherin transcription. Negatively regulates the Hippo signaling pathway and antagonizes phosphorylation of YAP1. Inhibits E2F-mediated transcription, and suppresses the expression of the majority of genes with E2F1-responsive elements. Regulates osteoblast development, function, differentiation and stress osteoclastogenesis. Enhances the ability of TRAF6 to activate adapter protein complex 1 (AP-1) and negatively regulates the canonical Wnt receptor signaling pathway in osteoblasts. May act as a tumor suppressor by inhibiting cell proliferation. This Homo sapiens (Human) protein is LIM domain-containing protein 1 (LIMD1).